The primary structure comprises 410 residues: Protein translocase subunit SecY (410 aa).

9 helical membrane-spanning segments follow: residues 61–81, 106–126, 135–155, 170–190, 195–215, 248–268, 289–309, 349–369, and 373–393; these read LSVF…IQIL, ITKY…VLRL, LYFI…VMWL, VIIF…QLFV, FLDF…IVFV, QGGV…DYVI, ILFL…YCSL, LFGS…EFVF, and VFKG…IDLI.

The protein belongs to the SecY/SEC61-alpha family. In terms of assembly, component of the plastid Sec protein translocase complex, which is composed of at least SecY and SecE.

The protein resides in the plastid. It is found in the chloroplast thylakoid membrane. The central subunit of the protein translocation channel SecYE. Consists of two halves formed by TMs 1-5 and 6-10. These two domains form a lateral gate at the front which open onto the bilayer between TMs 2 and 7, and are clamped together by SecE at the back. The channel is closed by both a pore ring composed of hydrophobic SecY resides and a short helix (helix 2A) on the extracellular side of the membrane which forms a plug. The sequence is that of Protein translocase subunit SecY from Cyanidium caldarium (Red alga).